The sequence spans 338 residues: MIHKNWQELIKPTQLVVQPGTDPARKATVVAEPLERGFGLTLGNALRRVLMSSLQGAAITSVQIDGVLHEFSSVAGVREDVTDIVLNLKGVAIRMDAEGPKRVSISAKGPRVVTAGDISESAGIDVLNKDHVICHLDDGADLYIELTVNTGKGYVAADKNRPEDAPIGLMPIDAIYSPVKKVSYDVQPTREGQVLDYDKLTLKLETDGSLSPDDAVAYAARIIQDQLSIFVNFDEPESATRQDDEDDLEFNPLLLKKVDELELSVRSANCLKNDNIVYIGDLIQKTEAEMLRTPNFGRKSLNEIKEVLSGMGLHLGMDIVDWPPDNIEELAKKYEDNF.

The interval 1–234 is alpha N-terminal domain (alpha-NTD); that stretch reads MIHKNWQELI…DQLSIFVNFD (234 aa). An alpha C-terminal domain (alpha-CTD) region spans residues 250–338; that stretch reads FNPLLLKKVD…ELAKKYEDNF (89 aa).

Belongs to the RNA polymerase alpha chain family. In terms of assembly, homodimer. The RNAP catalytic core consists of 2 alpha, 1 beta, 1 beta' and 1 omega subunit. When a sigma factor is associated with the core the holoenzyme is formed, which can initiate transcription.

It carries out the reaction RNA(n) + a ribonucleoside 5'-triphosphate = RNA(n+1) + diphosphate. In terms of biological role, DNA-dependent RNA polymerase catalyzes the transcription of DNA into RNA using the four ribonucleoside triphosphates as substrates. The chain is DNA-directed RNA polymerase subunit alpha from Jannaschia sp. (strain CCS1).